Reading from the N-terminus, the 243-residue chain is Terpene cyclase atmB (243 aa).

7 helical membrane passes run 19–39, 48–68, 78–98, 112–132, 134–154, 169–189, and 205–225; these read IADV…VGMV, YGMA…YGLI, GVFL…IKFG, LPLI…ALAA, IGPA…LSVG, SYTL…SAWL, and LILW…VCFY.

Belongs to the paxB family.

The protein localises to the membrane. Its function is as follows. Terpene cyclase; part of the ATM2 gene cluster that mediates the biosynthesis of aflatrem, a tremorgenic mycotoxin with acute neurotoxic effects. Synthesis of geranylgeranyl diphosphate (GGPP) by AtmG (a GGPP synthase) precedes condensation of GGPP with indole 3-glycerol phosphate, followed by epoxidation and cyclization by AtmM (a FAD-dependent monooxygenase) and AtmC (a prenyltransferase) to produce paspaline. AtmB is also essential for paspaline production, but its exact role has not been identified yet. AtmP, a cytochrome P450 monooxygenase, subsequently converts paspaline to 13-desoxypaxilline via PC-M6 by removal of the C-30 methyl group and oxidation at C-10. AtmQ, a cytochrome P450 monooxygenase, then catalyzes the oxidation of 13-desoxypaxilline, first at C-7 to produce paspalicine and then at C-13 to form paspalinine. Finally, AtmD prenylates paspalinine to form aflatrem. This chain is Terpene cyclase atmB, found in Aspergillus flavus.